Consider the following 770-residue polypeptide: Signal transducer and activator of transcription 3 (770 aa).

A2 bears the N-acetylalanine mark. K49 and K87 each carry N6-acetyllysine. Positions D150–M162 match the Essential for nuclear import motif. One can recognise an SH2 domain in the interval W580 to L670. Residues K601, K615, and K631 each carry the allysine; alternate modification. N6-acetyllysine; alternate occurs at positions 601, 615, and 631. Y640 carries the phosphotyrosine; by TYK2 modification. Allysine; alternate is present on K685. Position 685 is an N6-acetyllysine; alternate (K685). The residue at position 705 (Y705) is a Phosphotyrosine; by FER and PTK6. Residue K707 is modified to N6-acetyllysine. T714 is subject to Phosphothreonine. The residue at position 727 (S727) is a Phosphoserine; by DYRK2, NLK, NEK6, IRAK1, RPS6KA5, ZIPK/DAPK3 and PKC/PRKCE.

Belongs to the transcription factor STAT family. Forms a homodimer or a heterodimer with a related family member (at least STAT1). Component of a promoter-binding complex composed of STAT3, NFATC3 and NFATC4; complex formation is enhanced by calcineurin. Interacts with IL31RA, NCOA1, PELP1, SIPAR, SOCS7, STATIP1 and TMF1. Interacts with IL23R in presence of IL23. Interacts (via SH2 domain) with NLK. Interacts with ARL2BP; the interaction is enhanced by LIF and JAK1 expression. Interacts with KPNA4 and KPNA5; KPNA4 may be the primary mediator of nuclear import. Interacts with CAV2; the interaction is increased on insulin-induced tyrosine phosphorylation of CAV2 and leads to STAT3 activation. Interacts with ARL2BP; interaction is enhanced with ARL2. Interacts with NEK6. Binds to CDK9 when activated and nuclear. Interacts with BMX. Interacts with ZIPK/DAPK3. Interacts with PIAS3; the interaction occurs on stimulation by IL6, CNTF or OSM and inhibits the DNA binding activity of STAT3. In prostate cancer cells, interacts with PRKCE and promotes DNA binding activity of STAT3. Interacts with STMN3, antagonizing its microtubule-destabilizing activity. Interacts with the 'Lys-129' acetylated form of BIRC5/survivin. Interacts with FER. Interacts (via SH2 domain) with EIF2AK2/PKR (via the kinase catalytic domain). Interacts with FGFR4. Interacts with INPP5F; the interaction is independent of STAT3 Tyr-705 phosphorylation status. Interacts with OCIAD1 and OCIAD2. Interacts (unphosphorylated or phosphorylated at Ser-727) with PHB1. Interacts and may form heterodimers with NHLH1. Found in a complex with SLC39A6, SLC39A10 and with the 'Ser-727' phosphorylated form of STAT3 throughout mitosis. Interacts (when acetylated) with EP300 (via bromo domain); interaction takes place following STAT3 acetylation by EP300 and promotes enhanceosome assembly. Interacts (when acetylated) with BRD2 (via bromo domain); interaction promotes STAT3 recruitment to chromatin and T-helper Th17 cell differentiation. Interacts with FAM220A/SIPAR; the interaction occurs in both the nucleus and the cytoplasm, is enhanced by IL6 and promotes STAT3 dephosphorylation. Interacts in both unphosphorylated and phosphorylated forms with FAM220A but interacts preferentially in the phosphorylated form in the nucleus. Interacts with PTPN2; the interaction is promoted by FAM220A and leads to STAT3 dephosphorylation which negatively regulates STAT3 transcriptional activator activity. Post-translationally, activated through tyrosine phosphorylation by BMX. Tyrosine phosphorylated in response to IL-6, IL-11, CNTF, LIF, CSF-1, EGF, PDGF, IFN-alpha and OSM. Tyrosine phosphorylated in response to constitutively activated FGFR1, FGFR2, FGFR3 and FGFR4. Phosphorylated on serine upon DNA damage, probably by ATM or ATR. Serine phosphorylation is important for the formation of stable DNA-binding STAT3 homodimers and maximal transcriptional activity. ARL2BP may participate in keeping the phosphorylated state of STAT3 within the nucleus. Tyrosine phosphorylated upon stimulation with EGF. Upon LPS challenge, phosphorylated within the nucleus by IRAK1. Phosphorylated on Ser-727 by RPS6KA5. Dephosphorylation on tyrosine residues by PTPN2 negatively regulates IL6/interleukin-6 signaling. Phosphorylation at Tyr-705 by FER, isoform M2 of PKM (PKM2) or PTK6 leads to an increase of its transcriptional activity. Phosphorylation at Tyr-705 is increased in the presence of calcineurin. Phosphorylation at Tyr-640 by TYK2 negatively regulates transcriptional activity. In terms of processing, acetylated on lysine residues by EP300/p300, promoting its activation. Acetylation at Lys-49 and Lys-87 by EP300/p300 promotes its activation. Acetylation at Lys-87 by EP300/p300 promotes its association with BRD2 and recruitment to chromatin. Deacetylated at Lys-49 and Lys-87 by HDAC1. Acetylation at Lys-685 by EP300/p300 promotes its homodimerization and activation. Deacetylated at Lys-685 by HDAC3. Acetylated on lysine residues by CREBBP. Deacetylation by LOXL3 leads to disrupt STAT3 dimerization and inhibit STAT3 transcription activity. Oxidation of lysine residues to allysine on STAT3 preferentially takes place on lysine residues that are acetylated. Some lysine residues are oxidized to allysine by LOXL3, leading to disrupt STAT3 dimerization and inhibit STAT3 transcription activity. Oxidation of lysine residues to allysine on STAT3 preferentially takes place on lysine residues that are acetylated.

Its subcellular location is the cytoplasm. It localises to the nucleus. Signal transducer and transcription activator that mediates cellular responses to interleukins, KITLG/SCF, LEP and other growth factors. Once activated, recruits coactivators, such as NCOA1 or MED1, to the promoter region of the target gene. May mediate cellular responses to activated FGFR1, FGFR2, FGFR3 and FGFR4. Upon activation of IL6ST/gp130 signaling by interleukin-6 (IL6), binds to the IL6-responsive elements identified in the promoters of various acute-phase protein genes. Activated by IL31 through IL31RA. Acts as a regulator of inflammatory response by regulating differentiation of naive CD4(+) T-cells into T-helper Th17 or regulatory T-cells (Treg): acetylation promotes its transcription activity and cell differentiation while deacetylation and oxidation of lysine residues by LOXL3 inhibits differentiation. Involved in cell cycle regulation by inducing the expression of key genes for the progression from G1 to S phase, such as CCND1. Mediates the effects of LEP on melanocortin production, body energy homeostasis and lactation. May play an apoptotic role by transctivating BIRC5 expression under LEP activation. Cytoplasmic STAT3 represses macroautophagy by inhibiting EIF2AK2/PKR activity. Plays a crucial role in basal beta cell functions, such as regulation of insulin secretion. Following JAK/STAT signaling activation and as part of a complex with NFATC3 and NFATC4, binds to the alpha-beta E4 promoter region of CRYAB and activates transcription in cardiomyocytes. Plays an important role in host defense in methicillin-resistant S.aureus lung infection by regulating the expression of the antimicrobial lectin REG3G. This is Signal transducer and activator of transcription 3 (STAT3) from Bos taurus (Bovine).